The chain runs to 61 residues: MAKKSLIAKAKREQKYSVRTYNRCSICGRPRAYYRKFGMCRICLRKLSSKGEIPGVIKSSW.

The Zn(2+) site is built by Cys-24, Cys-27, Cys-40, and Cys-43.

This sequence belongs to the universal ribosomal protein uS14 family. Zinc-binding uS14 subfamily. Part of the 30S ribosomal subunit. Contacts proteins S3 and S10. It depends on Zn(2+) as a cofactor.

In terms of biological role, binds 16S rRNA, required for the assembly of 30S particles and may also be responsible for determining the conformation of the 16S rRNA at the A site. This chain is Small ribosomal subunit protein uS14, found in Syntrophus aciditrophicus (strain SB).